Here is a 351-residue protein sequence, read N- to C-terminus: Modulator of apoptosis 1 (351 aa).

The LIR motif lies at 49-52 (YRLL). The segment at 120 to 127 (LSRALGHE) is BH3-like. The RASSF1-binding stretch occupies residues 202 to 205 (KRRR).

It belongs to the PNMA family. Homodimer. Under normal circumstances, held in an inactive conformation by an intramolecular interaction. Interacts with BAX. Binding to RASSF1 isoform A (RASSF1A) relieves this inhibitory interaction and allows further binding to BAX. Also binds to BCL2 and BCLX. Recruited to the TNFRSF1A and TNFRSF10A complexes in response to their respective cognate ligand, after internalization. Interacts with TRIM39. Interacts with RASSF6. Interacts with ATG8 proteins MAP1LC3A, MAP1LC3B and MAP1LC3C. Does not interact with ATG8 proteins GABARAPL1, GABARAPL2 and GABARAP. Interacts with SQSTM1; promoting dissociation of SQSTM1 inclusion bodies that sequester KEAP1. Ubiquitinated and degraded during mitotic exit by APC/C-Cdh1, this modification is inhibited by TRIM39. Widely expressed, with high levels in heart and brain.

It is found in the cytoplasm. The protein localises to the cytosol. The protein resides in the mitochondrion outer membrane. Its subcellular location is the extracellular vesicle membrane. Retrotransposon-derived protein that forms virion-like capsids. Acts as an effector of BAX during apoptosis: enriched at outer mitochondria membrane and associates with BAX upon induction of apoptosis, facilitating BAX-dependent mitochondrial outer membrane permeabilization and apoptosis. Required for death receptor-dependent apoptosis. When associated with RASSF1, promotes BAX conformational change and translocation to mitochondrial membranes in response to TNF and TNFSF10 stimulation. Also promotes autophagy: promotes phagophore closure via association with ATG8 proteins. Acts as an inhibitor of the NFE2L2/NRF2 pathway via interaction with SQSTM1: interaction promotes dissociation of SQSTM1 inclusion bodies that sequester KEAP1, relieving inactivation of the BCR(KEAP1) complex. This is Modulator of apoptosis 1 from Homo sapiens (Human).